The chain runs to 32 residues: Cathepsin B-like cysteine proteinase (32 aa).

Positions 1–22 (KPNYKRQFEPFSDELIHYINLE) are cleaved as a propeptide — activation peptide.

The protein belongs to the peptidase C1 family.

Functionally, thiol protease. This Fasciola hepatica (Liver fluke) protein is Cathepsin B-like cysteine proteinase.